The primary structure comprises 686 residues: Cyclic nucleotide-gated channel alpha-1 (686 aa).

The Cytoplasmic portion of the chain corresponds to 1-165 (MKNNIINTQQ…PSGNTYYNWL (165 aa)). 2 disordered regions span residues 31-75 (ENGA…PSQR) and 87-149 (NVNN…EEKK). Residues 39–53 (SEDDDSASTSEESEN) are compositionally biased toward acidic residues. Residues 110-124 (SKSDDKNENKNDPEK) show a composition bias toward basic and acidic residues. The span at 125-134 (KKKKKDKEKK) shows a compositional bias: basic residues. Over residues 135-149 (KKEEKSKDKKEEEKK) the composition is skewed to basic and acidic residues. Residues 166-187 (FCITLPVMYNWTMVIARACFDE) traverse the membrane as a helical segment. Residues 188 to 197 (LQSDYLEYWL) lie on the Extracellular side of the membrane. The helical transmembrane segment at 198–218 (ILDYVSDIVYLIDMFVRTRTG) threads the bilayer. The Cytoplasmic segment spans residues 219–243 (YLEQGLLVKEELKLINKYKSNLQFK). The helical transmembrane segment at 244-262 (LDVLSLIPTDLLYFKLGWN) threads the bilayer. Residues 263–267 (YPEIR) lie on the Extracellular side of the membrane. The chain crosses the membrane as a helical span at residues 268 to 286 (LNRLLRFSRMFEFFQRTET). At 287–293 (RTNYPNI) the chain is on the cytoplasmic side. Positions 291 to 399 (PNIFRISNLV…GNIGSMISNM (109 aa)) are ion conduction pathway. The chain crosses the membrane as a helical span at residues 294–317 (FRISNLVMYIVIIIHWNACVFYSI). The Extracellular portion of the chain corresponds to 318–340 (SKAIGFGNDTWVYPDINDPEFGR). N-linked (GlcNAc...) asparagine glycosylation occurs at asparagine 325. The next 2 membrane-spanning stretches (helical) occupy residues 341–375 (LARKYVYSLYWSTLTLTTIGETPPPVRDSEYVFVV) and 376–400 (VDFLIGVLIFATIVGNIGSMISNMN). The segment at 358–361 (TIGE) is selectivity filter. A C-linker region spans residues 401-477 (AARAEFQARI…DTLKKVRIFA (77 aa)). The Cytoplasmic segment spans residues 401 to 686 (AARAEFQARI…GAESGPIDST (286 aa)). The cyclic nucleotide-binding domain stretch occupies residues 481–601 (AGLLVELVLK…EEKGKQILMK (121 aa)). 3',5'-cyclic GMP is bound by residues glycine 541, serine 544, arginine 557, and threonine 558. Residues arginine 557 and threonine 558 each contribute to the 3',5'-cyclic AMP site. Residues 619-673 (LEEKVTRMEGSVDLLQTRFARILAEYESMQQKLKQRLTKVEKFLKPLIDTEFSSI) adopt a coiled-coil conformation.

The protein belongs to the cyclic nucleotide-gated cation channel (TC 1.A.1.5) family. CNGA1 subfamily. In terms of assembly, forms heterotetrameric channels composed of CNGA1 and CNGB1 subunits with 3:1 stoichiometry. May also form cyclic nucleotide-activated homotetrameric channels, that are efficiently activated by saturating cGMP, but poorly activated by saturating cAMP compared to the heterotetramer with CNGB1. The channel binds Ca(2+)-bound CALM1 via CaM1 and CaM2 regions of the CNGB1 subunit; this interaction modulates the affinity of the channel for cNMPs in response to intracellular Ca(2+) levels. Rod cells in the retina.

The protein resides in the cell membrane. The enzyme catalyses Ca(2+)(in) = Ca(2+)(out). The catalysed reaction is Na(+)(in) = Na(+)(out). It catalyses the reaction K(+)(in) = K(+)(out). It carries out the reaction NH4(+)(in) = NH4(+)(out). The enzyme catalyses Rb(+)(in) = Rb(+)(out). The catalysed reaction is Li(+)(in) = Li(+)(out). It catalyses the reaction Cs(+)(in) = Cs(+)(out). Its activity is regulated as follows. Channel opening is activated by cGMP and at a much lesser extent by cAMP. Ca(2+) binding concominantly blocks monovalent cation currents. Inhibited by L-cis-diltiazem. Pore-forming subunit of the rod cyclic nucleotide-gated channel. Mediates rod photoresponses at dim light converting transient changes in intracellular cGMP levels into electrical signals. In the dark, cGMP levels are high and keep the channel open enabling a steady inward current carried by Na(+) and Ca(2+) ions that leads to membrane depolarization and neurotransmitter release from synaptic terminals. Upon photon absorption cGMP levels decline leading to channel closure and membrane hyperpolarization that ultimately slows neurotransmitter release and signals the presence of light, the end point of the phototransduction cascade. Conducts cGMP- and cAMP-gated ion currents, with permeability for monovalent and divalent cations. The selectivity for Ca(2+) over Na(+) increases with cGMP concentrations, whereas the selectivity among monovalent ions is independent of the cGMP levels. This Homo sapiens (Human) protein is Cyclic nucleotide-gated channel alpha-1.